We begin with the raw amino-acid sequence, 237 residues long: DNA replication inhibitor toxin SocB (237 aa).

In terms of assembly, interacts with cognate antitoxin SocA and with beta sliding clamp (dnaN). Degraded by ClpXP, recognition of SocB by ClpX requires SocA.

The protein localises to the cytoplasm. Toxic component of an atypical type II toxin-antitoxin (TA) system. Upon overexpression in the absence of its cognate antitoxin SocA, leads to inhibition of colony formation, cellular filamentation, incomplete DNA replication and induction of the SOS response. Exercises toxicity by binding the beta sliding clamp (dnaN), blocking DNA replication and leading to premature replication fork collapse and incomplete cell division. Unlike most type II TA systems, the SocB toxin is unstable and targeted by its cognate antitoxin SocA for degradation by ClpXP. Not toxic upon expression in E.coli. This Caulobacter vibrioides (strain NA1000 / CB15N) (Caulobacter crescentus) protein is DNA replication inhibitor toxin SocB.